The following is a 349-amino-acid chain: DNA-directed RNA polymerase subunit Rpo1N (349 aa).

Residues 306–349 (EDEGEEFAGEQATNLSESADDRMDRDRPSSHGAAPIDVPEVGDD) form a disordered region. Residues 324-334 (ADDRMDRDRPS) show a composition bias toward basic and acidic residues.

Belongs to the RNA polymerase beta' chain family. As to quaternary structure, part of the RNA polymerase complex.

It localises to the cytoplasm. The enzyme catalyses RNA(n) + a ribonucleoside 5'-triphosphate = RNA(n+1) + diphosphate. Functionally, DNA-dependent RNA polymerase (RNAP) catalyzes the transcription of DNA into RNA using the four ribonucleoside triphosphates as substrates. Forms the clamp head domain. The chain is DNA-directed RNA polymerase subunit Rpo1N from Halococcus morrhuae (Micrococcus morrhuae).